Here is a 447-residue protein sequence, read N- to C-terminus: N-succinylarginine dihydrolase (447 aa).

Substrate contacts are provided by residues 19-28 (AGLSFGNEAS), asparagine 110, and 137-138 (HR). Residue glutamate 174 is part of the active site. Arginine 212 contacts substrate. Histidine 248 is an active-site residue. Residues aspartate 250 and asparagine 359 each contribute to the substrate site. The active-site Nucleophile is cysteine 365.

It belongs to the succinylarginine dihydrolase family. As to quaternary structure, homodimer.

The catalysed reaction is N(2)-succinyl-L-arginine + 2 H2O + 2 H(+) = N(2)-succinyl-L-ornithine + 2 NH4(+) + CO2. It participates in amino-acid degradation; L-arginine degradation via AST pathway; L-glutamate and succinate from L-arginine: step 2/5. Its function is as follows. Catalyzes the hydrolysis of N(2)-succinylarginine into N(2)-succinylornithine, ammonia and CO(2). This is N-succinylarginine dihydrolase from Escherichia coli (strain SMS-3-5 / SECEC).